A 21-amino-acid polypeptide reads, in one-letter code: Mast cell protease 3 (21 aa).

The Peptidase S1 domain occupies 1 to 21 (IIGGVESRPHSRPYMATLEIT). Positions 1 to 21 (IIGGVESRPHSRPYMATLEIT) are disordered.

Belongs to the peptidase S1 family. Granzyme subfamily.

Thrombin inactivating protease. Displays chymotrypsin-like substrate specificity. In Mus musculus (Mouse), this protein is Mast cell protease 3 (Mcpt3).